A 295-amino-acid chain; its full sequence is Light-independent protochlorophyllide reductase iron-sulfur ATP-binding protein (295 aa).

Residues 10–15 and lysine 39 each bind ATP; that span reads GIGKST. Position 14 (serine 14) interacts with Mg(2+). [4Fe-4S] cluster is bound by residues cysteine 95 and cysteine 129. ATP is bound at residue 180-181; sequence NR. Over residues 275–289 the composition is skewed to basic and acidic residues; it reads TKDKKENKKEDKENS. Residues 275–295 form a disordered region; that stretch reads TKDKKENKKEDKENSADFTWL.

The protein belongs to the NifH/BchL/ChlL family. In terms of assembly, homodimer. Protochlorophyllide reductase is composed of three subunits; ChlL, ChlN and ChlB. The cofactor is [4Fe-4S] cluster.

It localises to the plastid. It is found in the chloroplast. The catalysed reaction is chlorophyllide a + oxidized 2[4Fe-4S]-[ferredoxin] + 2 ADP + 2 phosphate = protochlorophyllide a + reduced 2[4Fe-4S]-[ferredoxin] + 2 ATP + 2 H2O. It participates in porphyrin-containing compound metabolism; chlorophyll biosynthesis (light-independent). Its function is as follows. Component of the dark-operative protochlorophyllide reductase (DPOR) that uses Mg-ATP and reduced ferredoxin to reduce ring D of protochlorophyllide (Pchlide) to form chlorophyllide a (Chlide). This reaction is light-independent. The L component serves as a unique electron donor to the NB-component of the complex, and binds Mg-ATP. This is Light-independent protochlorophyllide reductase iron-sulfur ATP-binding protein from Physcomitrium patens (Spreading-leaved earth moss).